A 427-amino-acid polypeptide reads, in one-letter code: Phosphoglucosamine mutase (427 aa).

Ser-94 (phosphoserine intermediate) is an active-site residue. Mg(2+)-binding residues include Ser-94, Asp-228, Asp-230, and Asp-232. Ser-94 carries the phosphoserine modification.

Belongs to the phosphohexose mutase family. Mg(2+) serves as cofactor. Post-translationally, activated by phosphorylation.

It catalyses the reaction alpha-D-glucosamine 1-phosphate = D-glucosamine 6-phosphate. Its function is as follows. Catalyzes the conversion of glucosamine-6-phosphate to glucosamine-1-phosphate. The protein is Phosphoglucosamine mutase of Thermotoga sp. (strain RQ2).